A 215-amino-acid polypeptide reads, in one-letter code: Cytokinin riboside 5'-monophosphate phosphoribohydrolase LOG3 (215 aa).

Substrate contacts are provided by residues Glu-84, 102–103, 119–125, and Thr-131; these read RK and GYGTLEE.

The protein belongs to the LOG family. In terms of tissue distribution, expressed in roots and shoots. Detected in root procambium, lateral root primordia, vascular tissues of immature leaves, axillary buds, style and ovular funiculus.

Its subcellular location is the cytoplasm. The protein localises to the nucleus. The enzyme catalyses N(6)-(dimethylallyl)adenosine 5'-phosphate + H2O = N(6)-dimethylallyladenine + D-ribose 5-phosphate. It carries out the reaction 9-ribosyl-trans-zeatin 5'-phosphate + H2O = trans-zeatin + D-ribose 5-phosphate. Its function is as follows. Cytokinin-activating enzyme working in the direct activation pathway. Phosphoribohydrolase that converts inactive cytokinin nucleotides to the biologically active free-base forms. The sequence is that of Cytokinin riboside 5'-monophosphate phosphoribohydrolase LOG3 (LOG3) from Arabidopsis thaliana (Mouse-ear cress).